The chain runs to 110 residues: Multidrug transporter EmrE (110 aa).

4 helical membrane-spanning segments follow: residues 4-21, 34-52, 58-80, and 87-104; these read YIYL…TTLM, VGTI…QTLA, IAYA…GFFG, and AIIG…INLL.

It belongs to the drug/metabolite transporter (DMT) superfamily. Small multidrug resistance (SMR) (TC 2.A.7.1) family. As to quaternary structure, homodimer. Forms an antiparallel dimeric structure. Also forms dimers of homodimers.

The protein resides in the cell inner membrane. With respect to regulation, substrate identity influences both the ground-state and transition-state energies for the conformational exchange process, emphasizing the coupling between substrate binding and transport. Functionally, multidrug efflux protein that confers resistance to a wide range of toxic compounds, including ethidium, methyl viologen, acriflavine, tetraphenylphosphonium (TPP(+)), benzalkonium, propidium, dequalinium and the aminoglycoside antibiotics streptomycin and tobramycin. Can also transport the osmoprotectants betaine and choline. The drug efflux is coupled to an influx of protons. Can couple antiport of a drug to either one or two protons, performing both electrogenic and electroneutral transport of a single substrate. Simultaneously binds and cotransports proton and drug. This chain is Multidrug transporter EmrE (emrE), found in Escherichia coli (strain K12).